The sequence spans 291 residues: Nucleotide-binding protein PPA0813 (291 aa).

Residue 17–24 (GISGAGRR) coordinates ATP. Residue 66–69 (DVRS) participates in GTP binding.

It belongs to the RapZ-like family.

Its function is as follows. Displays ATPase and GTPase activities. In Cutibacterium acnes (strain DSM 16379 / KPA171202) (Propionibacterium acnes), this protein is Nucleotide-binding protein PPA0813.